The chain runs to 548 residues: Probable thiamine biosynthetic bifunctional enzyme, chloroplastic (548 aa).

Residues 1–10 (MAAAPQQSVH) show a composition bias toward polar residues. The tract at residues 1-40 (MAAAPQQSVHPSLPSSTSTLRLLISSSPRRPPPPPPRARR) is disordered. The N-terminal 47 residues, 1–47 (MAAAPQQSVHPSLPSSTSTLRLLISSSPRRPPPPPPRARRYNRLAAS), are a transit peptide targeting the chloroplast. The span at 11–28 (PSLPSSTSTLRLLISSSP) shows a compositional bias: low complexity. Residues 372-376 (QLREK) and Asn-404 each bind 4-amino-2-methyl-5-(diphosphooxymethyl)pyrimidine. Mg(2+)-binding residues include Asp-405 and Asp-424. Ser-443 contacts 4-amino-2-methyl-5-(diphosphooxymethyl)pyrimidine. 469–471 (TST) contacts 2-[(2R,5Z)-2-carboxy-4-methylthiazol-5(2H)-ylidene]ethyl phosphate. Lys-472 contacts 4-amino-2-methyl-5-(diphosphooxymethyl)pyrimidine. Residues Gly-499 and 522-523 (VS) each bind 2-[(2R,5Z)-2-carboxy-4-methylthiazol-5(2H)-ylidene]ethyl phosphate.

It belongs to the thiamine-phosphate synthase family. Requires Mg(2+) as cofactor.

The protein localises to the plastid. Its subcellular location is the chloroplast. It catalyses the reaction 2-[(2R,5Z)-2-carboxy-4-methylthiazol-5(2H)-ylidene]ethyl phosphate + 4-amino-2-methyl-5-(diphosphooxymethyl)pyrimidine + 2 H(+) = thiamine phosphate + CO2 + diphosphate. It carries out the reaction 2-(2-carboxy-4-methylthiazol-5-yl)ethyl phosphate + 4-amino-2-methyl-5-(diphosphooxymethyl)pyrimidine + 2 H(+) = thiamine phosphate + CO2 + diphosphate. The catalysed reaction is 4-methyl-5-(2-phosphooxyethyl)-thiazole + 4-amino-2-methyl-5-(diphosphooxymethyl)pyrimidine + H(+) = thiamine phosphate + diphosphate. The enzyme catalyses 4-amino-5-hydroxymethyl-2-methylpyrimidine + ATP = 4-amino-2-methyl-5-(phosphooxymethyl)pyrimidine + ADP + H(+). Its pathway is cofactor biosynthesis; thiamine diphosphate biosynthesis; thiamine phosphate from 4-amino-2-methyl-5-diphosphomethylpyrimidine and 4-methyl-5-(2-phosphoethyl)-thiazole: step 1/1. The protein operates within cofactor biosynthesis; thiamine diphosphate biosynthesis; 4-amino-2-methyl-5-diphosphomethylpyrimidine from 5-amino-1-(5-phospho-D-ribosyl)imidazole: step 2/3. Functionally, essential for thiamine biosynthesis. Bifunctional enzyme that catalyzes the phosphorylation of hydroxymethylpyrimidine phosphate (HMP-P) to HMP-PP and condenses 4-methyl-5-(beta-hydroxyethyl)thiazole monophosphate (THZ-P) and 2-methyl-4-amino-5-hydroxymethyl pyrimidine pyrophosphate (HMP-PP) to form thiamine monophosphate (TMP). The protein is Probable thiamine biosynthetic bifunctional enzyme, chloroplastic of Oryza sativa subsp. japonica (Rice).